The primary structure comprises 483 residues: Coagulation factor X isoform 1 (483 aa).

Residues 1-20 form the signal peptide; sequence MAPQLLLCLILTFLWSLPEA. The propeptide occupies 21 to 40; sequence ESNVFLKSKVANRFLQRTKR. Residues 41 to 86 form the Gla domain; that stretch reads ANSLFEEFKSGNIERECIEERCSKEEAREAFEDDEKTETFWNVYVD. E46, E47, E54, E56, E59, E60, E65, E66, E69, E72, and E75 each carry 4-carboxyglutamate. C57 and C62 are disulfide-bonded. Residues 86-122 enclose the EGF-like 1; calcium-binding domain; that stretch reads DGDQCSSNPCHYGGTCKDGIGSYTCTCLSGYEGKNCE. 11 cysteine pairs are disulfide-bonded: C90–C101, C95–C110, C112–C121, C129–C140, C136–C149, C151–C164, C172–C345, C245–C250, C265–C281, C393–C407, and C418–C446. S92 carries O-linked (Hex...) serine glycosylation. The residue at position 103 (D103) is a (3R)-3-hydroxyaspartate. Residues 125–165 form the EGF-like 2 domain; the sequence is LYKSCRVDNGDCWHFCKPVQNGIQCSCAESYLLGEDGHSCV. Positions 183 to 238 are cleaved as a propeptide — activation peptide; it reads EANLPDFQTDFSDDYDEIDENNFVETPTNFSGLVLTVQSQNATLLKKSDNPSPDIR. Positions 239–470 constitute a Peptidase S1 domain; the sequence is VVNGTDCKLG…FILWIKRIIR (232 aa). H280 serves as the catalytic Charge relay system. The N-linked (GlcNAc...) asparagine glycan is linked to N283. D325 acts as the Charge relay system in catalysis. The active-site Charge relay system is the S422.

Belongs to the peptidase S1 family. As to quaternary structure, heterodimer of a light chain and a heavy chain; disulfide-linked. In terms of processing, gamma-carboxyglutamate residues are formed by vitamin K dependent carboxylation. These residues are essential for the binding of calcium. The activation peptide is cleaved by factor IXa (in the intrinsic pathway), or by factor VIIa (in the extrinsic pathway). Post-translationally, the iron and 2-oxoglutarate dependent 3-hydroxylation of aspartate and asparagine is (R) stereospecific within EGF domains. Plasma; synthesized in the liver.

It is found in the secreted. It catalyses the reaction Selective cleavage of Arg-|-Thr and then Arg-|-Ile bonds in prothrombin to form thrombin.. Factor Xa is a vitamin K-dependent glycoprotein that converts prothrombin to thrombin in the presence of factor Va, calcium and phospholipid during blood clotting. In Pseudonaja textilis (Eastern brown snake), this protein is Coagulation factor X isoform 1 (F10).